Reading from the N-terminus, the 178-residue chain is MEQFHGTTILSVRRGDKVALGGDGQVTLGNIVMKGGARKVRRIYNNQVLVGFAGGTADAFSLLDRFEAKLEKHQGNLTRAAVELAKDWRTDRLLRRLEAMLIAADATTTLVITGNGDVLDPEGGICAIGSGGSYAQAAARALAENTDLSPREIVEKALGIAGDMCIYTNHNRIIETIE.

The active site involves Thr7. Gly162, Cys165, and Thr168 together coordinate Na(+).

It belongs to the peptidase T1B family. HslV subfamily. In terms of assembly, a double ring-shaped homohexamer of HslV is capped on each side by a ring-shaped HslU homohexamer. The assembly of the HslU/HslV complex is dependent on binding of ATP.

The protein localises to the cytoplasm. The enzyme catalyses ATP-dependent cleavage of peptide bonds with broad specificity.. Allosterically activated by HslU binding. Its function is as follows. Protease subunit of a proteasome-like degradation complex believed to be a general protein degrading machinery. This is ATP-dependent protease subunit HslV from Burkholderia mallei (strain ATCC 23344).